The chain runs to 497 residues: Intermediate filament protein A (497 aa).

A coil 1A region spans residues 1–32 (MSDLNDRLASYIEKVRFLEAQNRKLAADLDLL). Positions 1 to 342 (MSDLNDRLAS…KMLEGEENRA (342 aa)) constitute an IF rod domain. The tract at residues 33 to 46 (RGRWGKDTLSVRAM) is linker 1. A coil 1B region spans residues 47–184 (YEGELQEARK…RVHDQEIAEL (138 aa)). A linker 12 region spans residues 185–202 (QAMASRDTTPENREYFKN). Positions 203-342 (ELASAIRDIR…KMLEGEENRA (140 aa)) are coil 2. Positions 343 to 497 (GLRQLVEQVV…THIQRSSHTI (155 aa)) are tail. In terms of domain architecture, LTD spans 375 to 493 (SRTSFQRSAK…EERATHIQRS (119 aa)).

The protein belongs to the intermediate filament family. As to quaternary structure, a and B can form homopolymers. Giant body muscle cells.

It is found in the cytoplasm. This chain is Intermediate filament protein A, found in Ascaris suum (Pig roundworm).